A 543-amino-acid chain; its full sequence is Light-independent protochlorophyllide reductase subunit B (543 aa).

Position 36 (D36) interacts with [4Fe-4S] cluster. D287 (proton donor) is an active-site residue. 422–423 provides a ligand contact to substrate; the sequence is GL.

Belongs to the ChlB/BchB/BchZ family. In terms of assembly, protochlorophyllide reductase is composed of three subunits; BchL, BchN and BchB. Forms a heterotetramer of two BchB and two BchN subunits. [4Fe-4S] cluster serves as cofactor.

It catalyses the reaction chlorophyllide a + oxidized 2[4Fe-4S]-[ferredoxin] + 2 ADP + 2 phosphate = protochlorophyllide a + reduced 2[4Fe-4S]-[ferredoxin] + 2 ATP + 2 H2O. It functions in the pathway porphyrin-containing compound metabolism; bacteriochlorophyll biosynthesis (light-independent). Functionally, component of the dark-operative protochlorophyllide reductase (DPOR) that uses Mg-ATP and reduced ferredoxin to reduce ring D of protochlorophyllide (Pchlide) to form chlorophyllide a (Chlide). This reaction is light-independent. The NB-protein (BchN-BchB) is the catalytic component of the complex. The sequence is that of Light-independent protochlorophyllide reductase subunit B from Rubrivivax gelatinosus (strain NBRC 100245 / IL144).